The sequence spans 102 residues: Large ribosomal subunit protein bL21 (102 aa).

This sequence belongs to the bacterial ribosomal protein bL21 family. In terms of assembly, part of the 50S ribosomal subunit. Contacts protein L20.

Functionally, this protein binds to 23S rRNA in the presence of protein L20. This Pseudarthrobacter chlorophenolicus (strain ATCC 700700 / DSM 12829 / CIP 107037 / JCM 12360 / KCTC 9906 / NCIMB 13794 / A6) (Arthrobacter chlorophenolicus) protein is Large ribosomal subunit protein bL21.